A 94-amino-acid chain; its full sequence is DNA-binding protein HU (94 aa).

The protein belongs to the bacterial histone-like protein family. In terms of assembly, homodimer.

Functionally, histone-like DNA-binding protein which is capable of wrapping DNA to stabilize it, and thus to prevent its denaturation under extreme environmental conditions. The polypeptide is DNA-binding protein HU (hup) (Helicobacter pylori (strain J99 / ATCC 700824) (Campylobacter pylori J99)).